Here is a 327-residue protein sequence, read N- to C-terminus: Regulatory protein MsrR (327 aa).

Residues 1–18 (MDKETNDNEYRRQSEHRT) are compositionally biased toward basic and acidic residues. The tract at residues 1-24 (MDKETNDNEYRRQSEHRTSAPKRK) is disordered. At 1 to 31 (MDKETNDNEYRRQSEHRTSAPKRKKKKKIRK) the chain is on the cytoplasmic side. A helical; Signal-anchor for type II membrane protein membrane pass occupies residues 32-52 (LPIILLIVVILLIALVVYIVH). Residues 53–327 (SYNSGVEYAK…QAIKDFLDED (275 aa)) lie on the Extracellular side of the membrane.

Belongs to the LytR/CpsA/Psr (LCP) family.

Its subcellular location is the cell membrane. In terms of biological role, involved in SarA attenuation. Affects resistance to oxacillin and teicoplanin, as well as the synthesis of virulence factors. The sequence is that of Regulatory protein MsrR (msrR) from Staphylococcus aureus (strain Mu50 / ATCC 700699).